Consider the following 274-residue polypeptide: Large ribosomal subunit protein uL2 (274 aa).

Disordered regions lie at residues 28–54 (KPFA…TRHI) and 221–274 (RGTA…RSKK). The segment covering 39–49 (KTGGRNNNGRI) has biased composition (polar residues).

It belongs to the universal ribosomal protein uL2 family. In terms of assembly, part of the 50S ribosomal subunit. Forms a bridge to the 30S subunit in the 70S ribosome.

In terms of biological role, one of the primary rRNA binding proteins. Required for association of the 30S and 50S subunits to form the 70S ribosome, for tRNA binding and peptide bond formation. It has been suggested to have peptidyltransferase activity; this is somewhat controversial. Makes several contacts with the 16S rRNA in the 70S ribosome. The chain is Large ribosomal subunit protein uL2 from Edwardsiella ictaluri (strain 93-146).